The sequence spans 55 residues: Accessory gland-specific peptide 70A (55 aa).

The signal sequence occupies residues 1 to 19 (MKTLALFLVLVCVLGLVQS). The segment at 20–33 (WEWPWNRKPTKFPI) is essential for binding to sperm. Pro28 and Pro32 each carry hydroxyproline. An Isoleucine derivative modification is found at Ile33. A hydroxyproline mark is found at Pro34, Pro36, and Pro38. The interval 36–55 (PNPRDKWCRLNLGPAWGGRC) is sufficient to induce PMR. A disulfide bond links Cys43 and Cys55.

This sequence belongs to the Drosophila sex peptide family. Post-translationally, sperm-bound protein is cleaved to release an active C-terminal peptide. Gradual release from stored sperm may function to prolong PMR and enhance male reproductive success. In terms of tissue distribution, main cells of the accessory glands of males (paragonial gland).

It is found in the secreted. In terms of biological role, male seminal protein which triggers short- and long-term post-mating behavioral responses (PMR) in female Drosophila. Binds initially to sperm where it is later cleaved to release an active peptide within the female reproductive tract. Signals via the sex peptide receptor (SPR) in female flies; may also act via other receptors. Moderates the activity of distinct neuronal circuitries in the female genital tract to promote specific PMRs including: enhanced ovulation, increased egg laying rate, increased feeding/foraging rate, induced antimicrobial peptide synthesis, reduced mating receptivity, reduced day-time sleep and reduced lifespan in multiple mated females. The protein is Accessory gland-specific peptide 70A (SP) of Drosophila melanogaster (Fruit fly).